We begin with the raw amino-acid sequence, 78 residues long: Small ribosomal subunit protein bS18 (78 aa).

This sequence belongs to the bacterial ribosomal protein bS18 family. As to quaternary structure, part of the 30S ribosomal subunit. Forms a tight heterodimer with protein bS6.

Its function is as follows. Binds as a heterodimer with protein bS6 to the central domain of the 16S rRNA, where it helps stabilize the platform of the 30S subunit. In Lacticaseibacillus casei (strain BL23) (Lactobacillus casei), this protein is Small ribosomal subunit protein bS18.